The primary structure comprises 231 residues: Probable septum site-determining protein MinC (231 aa).

This sequence belongs to the MinC family. In terms of assembly, interacts with MinD and FtsZ.

Its function is as follows. Cell division inhibitor that blocks the formation of polar Z ring septums. Rapidly oscillates between the poles of the cell to destabilize FtsZ filaments that have formed before they mature into polar Z rings. Prevents FtsZ polymerization. This Bradyrhizobium diazoefficiens (strain JCM 10833 / BCRC 13528 / IAM 13628 / NBRC 14792 / USDA 110) protein is Probable septum site-determining protein MinC.